The sequence spans 621 residues: MPLLRSSQHIKNTYWNIPKKSFRTGVPQFAESKKTRILHLHPLCKSASGVESPPFFDSQTFSSISNRKEFRKMATTVPQVVSLDPTTIPIDYHTPIDDLSIEVKDISAEACPADEGLIVFLLNSAPKHSSSGGSGGNGGSAGSSGNGEGGAQIKINSSVKDNTINEFLKEGNMENFTGKLGTSKSFYIANDQKKYVSLAYVGCGPANEETELEIRKVAYALVTLLHDSKHKKVSIIFEIKIEEALFRFFLEHLFYEYVTDERFKSADKSTETDFIKNLSLHIANADAYKGQIDKARVYFYGTYYAAQLIAAPSNYCNPVSLSNAAVELAQKVNLECKILDVKELEELKMGAYLSVGKGSMYPNKFIHLTYKGAQTGASQNEKKKIALIGKGITFDSGGYNLKAAPGSMIDLMKFDMSGCAAVLGCAYCIGTIKPDNVEVHFLSAVCENMVSKNSYRPGDIITASNGKTIEVGNTDAEGRLTLADALVYAEKLGVDYIVDIATLTGAMLYSLGTSYAGVFGNNDQLINKILSSSKTSNEPVWWLPIINEYRSSLNSKYADLNNISSSVKASSVVASLFLKEFIENTPWAHIDIAGVSWNFKARKPKGFGVRLLTEFVLNDAV.

Residues methionine 1–methionine 73 constitute a propeptide that is removed on maturation. The segment at serine 129 to glutamine 152 is disordered. A compositionally biased stretch (gly residues) spans glycine 132 to glycine 150. Lysine 390, aspartate 395, and lysine 402 together coordinate a peptide. The Zn(2+) site is built by lysine 390 and aspartate 395. The segment at asparagine 400 to serine 417 is L13 loop. Residue lysine 402 is part of the active site. 5 residues coordinate Zn(2+): aspartate 410, methionine 412, aspartate 415, aspartate 475, and glutamate 477. A peptide contacts are provided by aspartate 415 and aspartate 475. Arginine 479 is an active-site residue.

The protein belongs to the peptidase M17 family. In terms of assembly, homohexamer composed of dimer of trimers. Both the identity and concentration of metal ions available dictate the extent to which oligomerization occurs; Mn(2+) and Co(2+) induces oligomerization, whereas Mg(2+) has no effect, and Zn(2+) causes irreversible protein aggregation in vitro. Zn(2+) is required as a cofactor.

The protein localises to the cytoplasm. The catalysed reaction is Release of an N-terminal amino acid, Xaa-|-Yaa-, in which Xaa is preferably Leu, but may be other amino acids including Pro although not Arg or Lys, and Yaa may be Pro. Amino acid amides and methyl esters are also readily hydrolyzed, but rates on arylamides are exceedingly low.. The enzyme catalyses L-cysteinylglycine + H2O = L-cysteine + glycine. With respect to regulation, oligomerization is required for catalytic activity and is metal-dependent. The type of metal that binds the 2 metal binding sites influences catalytic activity and substrate specificity. In vitro, activated by Co(2+), Mn(2+), Ni(2+), Mg(2+) and Zn(2+) with decreasing strength. Occupancy of the site 2 is essential and sufficient for activating the enzyme but occupation of the 2 sites is necessary for full catalytic activity. Inhibited by Ca(2+). Inhibited by fungal metabolite bestatin. Functionally, aminopeptidase which preferentially cleaves leucine residues from the N-terminus of peptides. Also, has some activity towards tryptophan and methionine and has very low activity towards alanine, arginine, asparagine, phenylalanine and tyrosine. No activity towards histidine, serine, valine, isoleucine, glycine, aspartic acid and glutamic acid. In addition, cleaves the Cys-Gly dipeptide, probably as part of the glutathione regulation pathway; cleavage only occurs in the presence of Mn(2+). Plays a role in the final step of host hemoglobin catabolism, by cleaving hemoglobin-derived oligopeptides providing a source of amino acids for the parasite protein synthesis and for the maintenance of osmotic homeostasis. The chain is Leucine aminopeptidase from Plasmodium vivax (strain Salvador I).